We begin with the raw amino-acid sequence, 457 residues long: UDP-N-acetylmuramate--L-alanine ligase (457 aa).

Residue 117–123 (GTHGKTT) coordinates ATP.

It belongs to the MurCDEF family.

The protein localises to the cytoplasm. It carries out the reaction UDP-N-acetyl-alpha-D-muramate + L-alanine + ATP = UDP-N-acetyl-alpha-D-muramoyl-L-alanine + ADP + phosphate + H(+). It participates in cell wall biogenesis; peptidoglycan biosynthesis. Its function is as follows. Cell wall formation. In Clostridium kluyveri (strain NBRC 12016), this protein is UDP-N-acetylmuramate--L-alanine ligase.